We begin with the raw amino-acid sequence, 150 residues long: 3-dehydroquinate dehydratase (150 aa).

Tyr26 acts as the Proton acceptor in catalysis. Substrate is bound by residues Asn75, His81, and Asp88. His101 (proton donor) is an active-site residue. Substrate contacts are provided by residues 102–103 (LS) and Arg112.

This sequence belongs to the type-II 3-dehydroquinase family. Homododecamer.

The catalysed reaction is 3-dehydroquinate = 3-dehydroshikimate + H2O. The protein operates within metabolic intermediate biosynthesis; chorismate biosynthesis; chorismate from D-erythrose 4-phosphate and phosphoenolpyruvate: step 3/7. In terms of biological role, catalyzes a trans-dehydration via an enolate intermediate. In Shewanella loihica (strain ATCC BAA-1088 / PV-4), this protein is 3-dehydroquinate dehydratase.